Reading from the N-terminus, the 746-residue chain is Lysine-specific histone demethylase 1 homolog 2 (746 aa).

Residues 1 to 26 form a disordered region; the sequence is MNSPASDETAPRRNRRKVSRKNYDEN. The 102-residue stretch at 51–152 folds into the SWIRM domain; the sequence is EKETETEALI…FGVSPLFAPY (102 aa). 4 residues coordinate FAD: E189, R191, R197, and E569.

Belongs to the flavin monoamine oxidase family. It depends on FAD as a cofactor. As to expression, expressed in the shoot and root apical regions of young seedlings. Expressed in inflorescences.

Probable histone demethylase that reduces the levels of histone H3 'Lys-4' methylation in chromatin of the floral repressor FLOWERING LOCUS C (FLC) and the sporophytically silenced floral repressor FWA. Seems to act in partial redundancy with FLOWERING LOCUS D (FLD) to repress FLC expression. Required for cytosine methylation of FWA. Controls primary seed dormancy by regulating DOG1 and abscisic acid signaling-related genes. In Arabidopsis thaliana (Mouse-ear cress), this protein is Lysine-specific histone demethylase 1 homolog 2.